Here is a 239-residue protein sequence, read N- to C-terminus: Small ribosomal subunit protein uS3 (239 aa).

The region spanning 39 to 107 (VRQVLRKKMS…SVHINVIEVR (69 aa)) is the KH type-2 domain. The interval 217–239 (KQDDISRGDRNADRSSRRSREVR) is disordered.

This sequence belongs to the universal ribosomal protein uS3 family. Part of the 30S ribosomal subunit. Forms a tight complex with proteins S10 and S14.

In terms of biological role, binds the lower part of the 30S subunit head. Binds mRNA in the 70S ribosome, positioning it for translation. The sequence is that of Small ribosomal subunit protein uS3 from Xylella fastidiosa (strain 9a5c).